The primary structure comprises 161 residues: Phosphopantetheine adenylyltransferase (161 aa).

A substrate-binding site is contributed by Ser9. ATP is bound by residues 9–10 (SF) and His17. Residues Lys41, Thr74, and Arg88 each coordinate substrate. ATP contacts are provided by residues 89-91 (GVR), Glu99, and 124-130 (NSFVASS).

The protein belongs to the bacterial CoaD family. As to quaternary structure, homohexamer. The cofactor is Mg(2+).

The protein resides in the cytoplasm. It carries out the reaction (R)-4'-phosphopantetheine + ATP + H(+) = 3'-dephospho-CoA + diphosphate. It participates in cofactor biosynthesis; coenzyme A biosynthesis; CoA from (R)-pantothenate: step 4/5. Functionally, reversibly transfers an adenylyl group from ATP to 4'-phosphopantetheine, yielding dephospho-CoA (dPCoA) and pyrophosphate. The protein is Phosphopantetheine adenylyltransferase of Lactobacillus acidophilus (strain ATCC 700396 / NCK56 / N2 / NCFM).